Consider the following 320-residue polypeptide: Ferrochelatase (320 aa).

Fe cation-binding residues include His194 and Glu275.

Belongs to the ferrochelatase family. As to quaternary structure, monomer.

The protein resides in the cytoplasm. It carries out the reaction heme b + 2 H(+) = protoporphyrin IX + Fe(2+). The protein operates within porphyrin-containing compound metabolism; protoheme biosynthesis; protoheme from protoporphyrin-IX: step 1/1. In terms of biological role, catalyzes the ferrous insertion into protoporphyrin IX. The polypeptide is Ferrochelatase (Escherichia coli O127:H6 (strain E2348/69 / EPEC)).